A 309-amino-acid chain; its full sequence is Probable manganese-dependent inorganic pyrophosphatase (309 aa).

The Mn(2+) site is built by H9, D13, D15, D75, H97, and D149.

Belongs to the PPase class C family. Mn(2+) is required as a cofactor.

The protein localises to the cytoplasm. The catalysed reaction is diphosphate + H2O = 2 phosphate + H(+). The chain is Probable manganese-dependent inorganic pyrophosphatase from Staphylococcus saprophyticus subsp. saprophyticus (strain ATCC 15305 / DSM 20229 / NCIMB 8711 / NCTC 7292 / S-41).